Here is a 1217-residue protein sequence, read N- to C-terminus: MTIPEKPQGVIWTDAQWQSIYATGQDVLVAAAAGSGKTAVLVERIIQKILRDGIDVDRLLVVTFTNLSAREMKHRVDQRIQEASIADPANAHLKNQRIKIHQAQISTLHSFCLKLIQQHYDVLNIDPNFRTSSEAENILLLEQTIDEVIEQHYDILDPAFIELTEQLSSDRSDDQFRMIIKQLYFFSVANPNPTNWLDQLVTPYEEEAQQAQLIQLLTDLSKVFITAAYDALNKAYDLFSMMDSVDKHLAVIEDERRLMGRVLEGGFIDIPYLTGHEFGARLPNVTAKIKEANEMMVDALEDAKLQYKKYKSLIDKVKSDYFSREADDLKADMQQLAPRVKYLARIVKDVMSEFNRKKRSKNILDFSDYEHFALQILTNEDGSPSEIAESYRQHFQEILVDEYQDTNRVQEKILSCIKTGDEHNGNLFMVGDVKQSIYKFRQADPSLFIEKYQRFTIDGDGTGRRIDLSQNFRSRKEVLSTTNYIFKHMMDEQVGEVKYDEAAQLYYGAPYDESDHPVNLKVLVEADQEHSDLTGSEQEAHFIVEQVKDILEHQKVYDMKTGSYRSATYKDIVILERSFGQARNLQQAFKNEDIPFHVNSREGYFEQTEVRLVLSFLRAIDNPLQDIYLVGLMRSVIYQFKEDELAQIRILSPNDDYFYQSIVNYINDEAADAILVDKLKMFLSDIQSYQQYSKDHPVYQLIDKFYNDHYVIQYFSGLIGGRGRRANLYGLFNKAIEFENSSFRGLYQFIRFIDELIERGKDFGEENVVGPNDNVVRMMTIHSSKGLEFPFVIYSGLSKDFNKRDLKQPVILNQQFGLGMDYFDVDKEMAFPSLASVAYRAVAEKELVSEEIRLVYVALTRAKEQLYLIGRVKNDKSLLELEQLSISGEHIAVNERLTSPNPFHLIYSILSKHQSASIPDDLKFEKDIAQVEDSSRPNVNISIIYFEDVSTETILDNNEYRSVNQLETMQNGNEDVKAQIKHQLDYQYPYVNDTKKPSKQSVSELKRQYETEESGTSYERVRQYRIGFSTYERPKFLSEQGKRKANEIGTLMHTVMQHLPFKKERISEVELHQYIDGLIDKHIIEADAKKDIRMDEIMTFINSELYSIIAEAEQVYRELPFVVNQALVDQLPQGDEDVSIIQGMIDLIFVKDGVHYFVDYKTDAFNRRRGMTDEEIGTQLKNKYKIQMKYYQNTLQTILNKEVKGYLYFFKFGTLQL.

Residues 10–475 (VIWTDAQWQS…IDLSQNFRSR (466 aa)) enclose the UvrD-like helicase ATP-binding domain. Residue 31-38 (AAAGSGKT) coordinates ATP. Residues 476–786 (KEVLSTTNYI…RMMTIHSSKG (311 aa)) form the UvrD-like helicase C-terminal domain.

It belongs to the helicase family. AddA subfamily. As to quaternary structure, heterodimer of AddA and AddB/RexB. Mg(2+) is required as a cofactor.

It carries out the reaction Couples ATP hydrolysis with the unwinding of duplex DNA by translocating in the 3'-5' direction.. The catalysed reaction is ATP + H2O = ADP + phosphate + H(+). The heterodimer acts as both an ATP-dependent DNA helicase and an ATP-dependent, dual-direction single-stranded exonuclease. Recognizes the chi site generating a DNA molecule suitable for the initiation of homologous recombination. The AddA nuclease domain is required for chi fragment generation; this subunit has the helicase and 3' -&gt; 5' nuclease activities. The protein is ATP-dependent helicase/nuclease subunit A of Staphylococcus aureus (strain MW2).